A 527-amino-acid chain; its full sequence is ADP-ribosylation factor-like protein 13B (527 aa).

GTP contacts are provided by residues Gly-26–Thr-33, Asp-69–Gly-73, and Asn-128–Asp-131. Basic and acidic residues predominate over residues Glu-200 to Lys-248. Disordered regions lie at residues Glu-200–Leu-252 and Gly-300–Val-503. Over residues Gln-381–Ser-444 the composition is skewed to low complexity. The span at Ala-445 to Ser-457 shows a compositional bias: gly residues.

The protein belongs to the small GTPase superfamily. Arf family. As to quaternary structure, monomer.

The protein resides in the cell projection. It is found in the cilium membrane. Its function is as follows. Cilium-specific protein required to control the microtubule-based, ciliary axoneme structure. May act by maintaining the association between IFT subcomplexes A and B. The polypeptide is ADP-ribosylation factor-like protein 13B (ARL13) (Chlamydomonas reinhardtii (Chlamydomonas smithii)).